The primary structure comprises 472 residues: MTNNPYQIKHFHFIGIGGIGMSGLAMVLRQRGFAVSGSDKSNNPSINNLKDLGINIFKEQAASNISQLSEDKNEQLIIVISSAIRQENEELKEAYEKNLKILHRSDILAFLIKQQYSILIAGSHGKTTTSTIITTILGKANQDPTAIIGGIVPYYNSNAYVGKGKFLIAEADESDGSLTKYDGDIGLLTNIELDHTDYYTNIDSLINTIKKFTKNCKKIVANYDCNNLRKACPDKTIWWSTNEFKNINFAAIPKIMNGQITLASYYENGKYIDDISISLPGVHNLNNTLGAIAACRSADINFSDIKPHVSSLKCPERRFQFKGIWKGRQIVDDYAHHPSEIRETLSMARLMINTKKSILPMAADRIVVIFQPHRYSRTRDLITEFAKNLGAADLVILTPIYSAGEEPIKGITSEKLKSCTLANNPNLPIFTCKQLRDLENIINLKTRENDLLLFMGAGDITKVSEKLSKKIK.

An ATP-binding site is contributed by Gly122–Thr128.

This sequence belongs to the MurCDEF family.

The protein localises to the cytoplasm. It catalyses the reaction UDP-N-acetyl-alpha-D-muramate + L-alanine + ATP = UDP-N-acetyl-alpha-D-muramoyl-L-alanine + ADP + phosphate + H(+). It functions in the pathway cell wall biogenesis; peptidoglycan biosynthesis. Its function is as follows. Cell wall formation. This is UDP-N-acetylmuramate--L-alanine ligase from Prochlorococcus marinus (strain SARG / CCMP1375 / SS120).